A 533-amino-acid polypeptide reads, in one-letter code: Peptide chain release factor 3 (533 aa).

A tr-type G domain is found at 9–284 (ARRRTFAIIS…ALCQLSPPPL (276 aa)). Residues 18 to 25 (SHPDAGKT), 95 to 99 (DTPGH), and 149 to 152 (NKLD) contribute to the GTP site.

It belongs to the TRAFAC class translation factor GTPase superfamily. Classic translation factor GTPase family. PrfC subfamily.

The protein resides in the cytoplasm. In terms of biological role, increases the formation of ribosomal termination complexes and stimulates activities of RF-1 and RF-2. It binds guanine nucleotides and has strong preference for UGA stop codons. It may interact directly with the ribosome. The stimulation of RF-1 and RF-2 is significantly reduced by GTP and GDP, but not by GMP. The polypeptide is Peptide chain release factor 3 (Cupriavidus pinatubonensis (strain JMP 134 / LMG 1197) (Cupriavidus necator (strain JMP 134))).